The following is a 953-amino-acid chain: Ubiquitin carboxyl-terminal hydrolase CYLD (953 aa).

Positions 106–590 (CEERFSLFKN…FEIMIGKKKG (485 aa)) are interaction with TRIP. 2 consecutive CAP-Gly domains span residues 153–198 (LAER…VFVA) and 253–286 (DVLPGKESLGYFVGVDMDNPIGNWDGRFDGVQLC). Disordered regions lie at residues 313–349 (PPKLAFMSRGVGDKGSFSHNKPKATGSTSDPGTRNRS) and 384–410 (SLTEIPPDFGHASPPLQPPSMNSLSSE). Residues 337-346 (TGSTSDPGTR) are compositionally biased toward polar residues. Phosphoserine is present on residues Ser384, Ser415, and Ser419. The interval 391-466 (DFGHASPPLQ…LAVSSGNSHG (76 aa)) is interaction with TRAF2. Residues 467-681 (LEVGSLAEVK…FTSEEKDPEE (215 aa)) form an interaction with IKBKG/NEMO region. Residues 489–532 (GQPPGLNEVLAGLELEDECAGCTDGTFRGTRYFTCALKKALFVK) form the CAP-Gly 3 domain. In terms of domain architecture, USP spans 589–947 (KGIQGHYNSC…DAYMCMYQSP (359 aa)). Cys598 acts as the Nucleophile in catalysis. A B-box region spans residues 778–830 (LEDTPRQCRICGGLAMYECRECYDDPDISAGKIKQFCKTCNAQVHLHPKRLNH). 8 residues coordinate Zn(2+): Cys785, Cys788, Cys796, Cys799, Cys814, Cys817, His822, and His830. His868 (proton acceptor) is an active-site residue.

It belongs to the peptidase C19 family. Interacts (via CAP-Gly domain) with IKBKG/NEMO (via proline-rich C-terminal region). Interacts with TRAF2 and TRIP. Interacts with PLK1, DVL1, DVL3, MAVS, TBK1, IKKE and RIGI. Interacts (via CAP-Gly domain) with microtubules. Interacts with HDAC6 and BCL3. Interacts with MAP3K7. Identified in a complex with TRAF6 and SQSTM1. Interacts with OPTN and SQSTM1. Interacts with CEP350. Interacts with RNF31; the interaction is indirect and is mediated via SPATA2. Interacts with SPATA2 (via the PUB domain); the interaction is direct and recruits CYLD to the LUBAC complex, thereby regulating TNF-alpha-induced necroptosis. Phosphorylated on several serine residues by IKKA and/or IKKB in response to immune stimuli. Phosphorylation requires IKBKG. Phosphorylation abolishes TRAF2 deubiquitination, interferes with the activation of Jun kinases, and strongly reduces CD40-dependent gene activation by NF-kappa-B. Post-translationally, ubiquitinated. Polyubiquitinated in hepatocytes treated with palmitic acid. Ubiquitination is mediated by E3 ligase TRIM47 and leads to proteasomal degradation.

It localises to the cytoplasm. Its subcellular location is the perinuclear region. It is found in the cytoskeleton. The protein localises to the cell membrane. The protein resides in the microtubule organizing center. It localises to the centrosome. Its subcellular location is the spindle. It is found in the cilium basal body. It carries out the reaction Thiol-dependent hydrolysis of ester, thioester, amide, peptide and isopeptide bonds formed by the C-terminal Gly of ubiquitin (a 76-residue protein attached to proteins as an intracellular targeting signal).. In terms of biological role, deubiquitinase that specifically cleaves 'Lys-63'- and linear 'Met-1'-linked polyubiquitin chains and is involved in NF-kappa-B activation and TNF-alpha-induced necroptosis. Negatively regulates NF-kappa-B activation by deubiquitinating upstream signaling factors. Contributes to the regulation of cell survival, proliferation and differentiation via its effects on NF-kappa-B activation. Negative regulator of Wnt signaling. Inhibits HDAC6 and thereby promotes acetylation of alpha-tubulin and stabilization of microtubules. Plays a role in the regulation of microtubule dynamics, and thereby contributes to the regulation of cell proliferation, cell polarization, cell migration, and angiogenesis. Required for normal cell cycle progress and normal cytokinesis. Inhibits nuclear translocation of NF-kappa-B. Plays a role in the regulation of inflammation and the innate immune response, via its effects on NF-kappa-B activation. Dispensable for the maturation of intrathymic natural killer cells, but required for the continued survival of immature natural killer cells. Negatively regulates TNFRSF11A signaling and osteoclastogenesis. Involved in the regulation of ciliogenesis, allowing ciliary basal bodies to migrate and dock to the plasma membrane; this process does not depend on NF-kappa-B activation. Ability to remove linear ('Met-1'-linked) polyubiquitin chains regulates innate immunity and TNF-alpha-induced necroptosis: recruited to the LUBAC complex via interaction with SPATA2 and restricts linear polyubiquitin formation on target proteins. Regulates innate immunity by restricting linear polyubiquitin formation on RIPK2 in response to NOD2 stimulation. Involved in TNF-alpha-induced necroptosis by removing linear ('Met-1'-linked) polyubiquitin chains from RIPK1, thereby regulating the kinase activity of RIPK1. Negatively regulates intestinal inflammation by removing 'Lys-63' linked polyubiquitin chain of NLRP6, thereby reducing the interaction between NLRP6 and PYCARD/ASC and formation of the NLRP6 inflammasome. Does not catalyze deubiquitination of heterotypic 'Lys-63'-/'Lys-48'-linked branched ubiquitin chains. Removes 'Lys-63' linked polyubiquitin chain of MAP3K7, which inhibits phosphorylation and blocks downstream activation of the JNK-p38 kinase cascades. Also removes 'Lys-63'-linked polyubiquitin chains of MAP3K1 and MA3P3K3, which inhibit their interaction with MAP2K1 and MAP2K2. The chain is Ubiquitin carboxyl-terminal hydrolase CYLD (CYLD) from Bos taurus (Bovine).